Consider the following 102-residue polypeptide: MEKIQKMISEKSVVIFSNNSCCMSHTIKTLFLDLGVNPTIYELDEINRGKEIEYALAQLGCSPTVPVVFIGGQLVGGANQVMSLHLNRSLIPMLKRFGALWL.

The Glutaredoxin domain maps to 1–101 (MEKIQKMISE…PMLKRFGALW (101 aa)). A [2Fe-2S] cluster-binding site is contributed by Cys21. Residues 99–102 (ALWL) carry the Responsive for interaction with TGA factors motif.

Belongs to the glutaredoxin family. CC-type subfamily.

It localises to the cytoplasm. The protein resides in the nucleus. May only reduce GSH-thiol disulfides, but not protein disulfides. The sequence is that of Monothiol glutaredoxin-S8 (GRXS8) from Arabidopsis thaliana (Mouse-ear cress).